The chain runs to 273 residues: Putative pyruvate, phosphate dikinase regulatory protein 2 (273 aa).

Residue 151–158 (GVSRTSKT) coordinates ADP.

It belongs to the pyruvate, phosphate/water dikinase regulatory protein family. PDRP subfamily.

It catalyses the reaction N(tele)-phospho-L-histidyl/L-threonyl-[pyruvate, phosphate dikinase] + ADP = N(tele)-phospho-L-histidyl/O-phospho-L-threonyl-[pyruvate, phosphate dikinase] + AMP + H(+). The enzyme catalyses N(tele)-phospho-L-histidyl/O-phospho-L-threonyl-[pyruvate, phosphate dikinase] + phosphate + H(+) = N(tele)-phospho-L-histidyl/L-threonyl-[pyruvate, phosphate dikinase] + diphosphate. Bifunctional serine/threonine kinase and phosphorylase involved in the regulation of the pyruvate, phosphate dikinase (PPDK) by catalyzing its phosphorylation/dephosphorylation. This chain is Putative pyruvate, phosphate dikinase regulatory protein 2, found in Syntrophomonas wolfei subsp. wolfei (strain DSM 2245B / Goettingen).